The primary structure comprises 288 residues: Probable endonuclease 4 (288 aa).

9 residues coordinate Zn(2+): His75, His115, Glu153, Asp187, His190, His224, Asp237, His239, and Glu269.

It belongs to the AP endonuclease 2 family. The cofactor is Zn(2+).

It catalyses the reaction Endonucleolytic cleavage to 5'-phosphooligonucleotide end-products.. Functionally, endonuclease IV plays a role in DNA repair. It cleaves phosphodiester bonds at apurinic or apyrimidinic (AP) sites, generating a 3'-hydroxyl group and a 5'-terminal sugar phosphate. This chain is Probable endonuclease 4, found in Chlamydia trachomatis serovar L2 (strain ATCC VR-902B / DSM 19102 / 434/Bu).